A 253-amino-acid chain; its full sequence is Diphthine synthase (253 aa).

S-adenosyl-L-methionine contacts are provided by residues aspartate 83, leucine 86, 111 to 112, leucine 163, and leucine 205; that span reads SI.

Belongs to the diphthine synthase family. In terms of assembly, homodimer.

It carries out the reaction 2-[(3S)-amino-3-carboxypropyl]-L-histidyl-[translation elongation factor 2] + 3 S-adenosyl-L-methionine = diphthine-[translation elongation factor 2] + 3 S-adenosyl-L-homocysteine + 3 H(+). It participates in protein modification; peptidyl-diphthamide biosynthesis. Its function is as follows. S-adenosyl-L-methionine-dependent methyltransferase that catalyzes the trimethylation of the amino group of the modified target histidine residue in translation elongation factor 2 (EF-2), to form an intermediate called diphthine. The three successive methylation reactions represent the second step of diphthamide biosynthesis. This is Diphthine synthase from Pyrobaculum neutrophilum (strain DSM 2338 / JCM 9278 / NBRC 100436 / V24Sta) (Thermoproteus neutrophilus).